A 447-amino-acid polypeptide reads, in one-letter code: Sporulation protein YpeB (447 aa).

This sequence belongs to the YpeB family.

In terms of biological role, required for spore cortex hydrolysis during germination. Appears to be required for either expression, localization, activation or function of SleB. This is Sporulation protein YpeB from Oceanobacillus iheyensis (strain DSM 14371 / CIP 107618 / JCM 11309 / KCTC 3954 / HTE831).